A 162-amino-acid chain; its full sequence is 3-hydroxyacyl-[acyl-carrier-protein] dehydratase FabZ (162 aa).

His49 is an active-site residue.

It belongs to the thioester dehydratase family. FabZ subfamily.

It localises to the cytoplasm. The enzyme catalyses a (3R)-hydroxyacyl-[ACP] = a (2E)-enoyl-[ACP] + H2O. Involved in unsaturated fatty acids biosynthesis. Catalyzes the dehydration of short chain beta-hydroxyacyl-ACPs and long chain saturated and unsaturated beta-hydroxyacyl-ACPs. This chain is 3-hydroxyacyl-[acyl-carrier-protein] dehydratase FabZ, found in Solibacter usitatus (strain Ellin6076).